The following is an 882-amino-acid chain: Pyruvate dehydrogenase E1 component (882 aa).

As to quaternary structure, homodimer. Part of the PDH complex, consisting of multiple copies of pyruvate dehydrogenase (E1), dihydrolipoamide acetyltransferase (E2) and lipoamide dehydrogenase (E3). It depends on thiamine diphosphate as a cofactor.

The enzyme catalyses N(6)-[(R)-lipoyl]-L-lysyl-[protein] + pyruvate + H(+) = N(6)-[(R)-S(8)-acetyldihydrolipoyl]-L-lysyl-[protein] + CO2. Functionally, component of the pyruvate dehydrogenase (PDH) complex, that catalyzes the overall conversion of pyruvate to acetyl-CoA and CO(2). This chain is Pyruvate dehydrogenase E1 component (aceE), found in Pseudomonas aeruginosa (strain ATCC 15692 / DSM 22644 / CIP 104116 / JCM 14847 / LMG 12228 / 1C / PRS 101 / PAO1).